A 118-amino-acid polypeptide reads, in one-letter code: UPF0102 protein CHY_1414 (118 aa).

It belongs to the UPF0102 family.

This is UPF0102 protein CHY_1414 from Carboxydothermus hydrogenoformans (strain ATCC BAA-161 / DSM 6008 / Z-2901).